A 153-amino-acid chain; its full sequence is NAD(P)H-quinone oxidoreductase subunit N (153 aa).

It belongs to the complex I NdhN subunit family. As to quaternary structure, NDH-1 can be composed of about 15 different subunits; different subcomplexes with different compositions have been identified which probably have different functions.

The protein localises to the cellular thylakoid membrane. It carries out the reaction a plastoquinone + NADH + (n+1) H(+)(in) = a plastoquinol + NAD(+) + n H(+)(out). It catalyses the reaction a plastoquinone + NADPH + (n+1) H(+)(in) = a plastoquinol + NADP(+) + n H(+)(out). NDH-1 shuttles electrons from an unknown electron donor, via FMN and iron-sulfur (Fe-S) centers, to quinones in the respiratory and/or the photosynthetic chain. The immediate electron acceptor for the enzyme in this species is believed to be plastoquinone. Couples the redox reaction to proton translocation, and thus conserves the redox energy in a proton gradient. Cyanobacterial NDH-1 also plays a role in inorganic carbon-concentration. In Prochlorococcus marinus (strain MIT 9303), this protein is NAD(P)H-quinone oxidoreductase subunit N.